The primary structure comprises 498 residues: Nucleoprotein (498 aa).

A Unconventional nuclear localization signal motif is present at residues 1–18; sequence MASQGTKRSYEQMETDGE. Residues 1-21 are disordered; the sequence is MASQGTKRSYEQMETDGERQN. Over residues 8–21 the composition is skewed to basic and acidic residues; it reads RSYEQMETDGERQN. The short motif at 198 to 216 is the Bipartite nuclear localization signal element; sequence KRGINDRNFWRGENGRKTR.

Belongs to the influenza viruses nucleoprotein family. In terms of assembly, homomultimerizes to form the nucleocapsid. May bind host exportin-1/XPO1. Binds to viral genomic RNA. Protein-RNA contacts are mediated by a combination of electrostatic interactions between positively charged residues and the phosphate backbone and planar interactions between aromatic side chains and bases. Post-translationally, late in virus-infected cells, may be cleaved from a 56-kDa protein to a 53-kDa protein by a cellular caspase. This cleavage might be a marker for the onset of apoptosis in infected cells or have a specific function in virus host interaction.

It localises to the virion. The protein localises to the host nucleus. Its function is as follows. Encapsidates the negative strand viral RNA, protecting it from nucleases. The encapsidated genomic RNA is termed the ribonucleoprotein (RNP) and serves as template for transcription and replication. The RNP needs to be localized in the host nucleus to start an infectious cycle, but is too large to diffuse through the nuclear pore complex. NP comprises at least 2 nuclear localization signals that are responsible for the active RNP import into the nucleus through cellular importin alpha/beta pathway. Later in the infection, nclear export of RNPs are mediated through viral proteins NEP interacting with M1 which binds nucleoproteins. It is possible that nucleoprotein binds directly host exportin-1/XPO1 and plays an active role in RNPs nuclear export. M1 interaction with RNP seems to hide nucleoprotein's nuclear localization signals. Soon after a virion infects a new cell, M1 dissociates from the RNP under acidification of the virion driven by M2 protein. Dissociation of M1 from RNP unmasks nucleoprotein's nuclear localization signals, targeting the RNP to the nucleus. The polypeptide is Nucleoprotein (Influenza A virus (strain A/China:Nanchang/11/1996 H1N1)).